Here is a 354-residue protein sequence, read N- to C-terminus: Elongation factor Ts (354 aa).

The involved in Mg(2+) ion dislocation from EF-Tu stretch occupies residues 81–84; that stretch reads TDFV.

It belongs to the EF-Ts family.

The protein localises to the cytoplasm. Its function is as follows. Associates with the EF-Tu.GDP complex and induces the exchange of GDP to GTP. It remains bound to the aminoacyl-tRNA.EF-Tu.GTP complex up to the GTP hydrolysis stage on the ribosome. This Campylobacter curvus (strain 525.92) protein is Elongation factor Ts.